The chain runs to 225 residues: RNA-binding protein 24 (225 aa).

Positions 11-88 (TKIFVGGLPY…RKANVNLAYL (78 aa)) constitute an RRM domain.

It is found in the nucleus. The protein localises to the cytoplasm. Multifunctional RNA-binding protein involved in the regulation of pre-mRNA splicing, mRNA stability and mRNA translation important for cell fate decision and differentiation. Plays a major role in pre-mRNA alternative splicing regulation. Mediates preferentially muscle-specific exon inclusion in numerous mRNAs important for striated cardiac and skeletal muscle cell differentiation. Binds to intronic splicing enhancer (ISE) composed of stretches of GU-rich motifs localized in flanking intron of exon that will be included by alternative splicing. Involved in embryonic stem cell (ESC) transition to cardiac cell differentiation by promoting pre-mRNA alternative splicing events of several pluripotency and/or differentiation genes. Plays a role in the regulation of mRNA stability and mRNA translation to which it is bound. Involved in myogenic differentiation by regulating MYOG levels. Binds to a huge amount of mRNAs. Involved in embryonic heart development and myogenic differentiation of somitic muscle progenitors. This is RNA-binding protein 24 from Gallus gallus (Chicken).